The following is a 634-amino-acid chain: Threonine--tRNA ligase (634 aa).

In terms of domain architecture, TGS spans 1 to 61; the sequence is MINIRFPDGS…NSNCELRLIT (61 aa). Positions 241–532 are catalytic; sequence DHRKIGKVLD…LIEHYAGNLP (292 aa). Residues Cys332, His383, and His509 each coordinate Zn(2+).

This sequence belongs to the class-II aminoacyl-tRNA synthetase family. As to quaternary structure, homodimer. It depends on Zn(2+) as a cofactor.

The protein resides in the cytoplasm. It carries out the reaction tRNA(Thr) + L-threonine + ATP = L-threonyl-tRNA(Thr) + AMP + diphosphate + H(+). Functionally, catalyzes the attachment of threonine to tRNA(Thr) in a two-step reaction: L-threonine is first activated by ATP to form Thr-AMP and then transferred to the acceptor end of tRNA(Thr). Also edits incorrectly charged L-seryl-tRNA(Thr). The protein is Threonine--tRNA ligase of Francisella tularensis subsp. holarctica (strain OSU18).